A 318-amino-acid chain; its full sequence is uncharacterized protein (318 aa).

Belongs to the NAD(P)-dependent epimerase/dehydratase family.

This is an uncharacterized protein from Staphylococcus haemolyticus (strain JCSC1435).